A 237-amino-acid chain; its full sequence is Probable transcriptional regulatory protein PSHAa1370 (237 aa).

It belongs to the TACO1 family.

It localises to the cytoplasm. The sequence is that of Probable transcriptional regulatory protein PSHAa1370 from Pseudoalteromonas translucida (strain TAC 125).